Here is a 400-residue protein sequence, read N- to C-terminus: Leucine-rich repeat flightless-interacting protein 2 (400 aa).

Disordered regions lie at residues 1–28 and 53–119; these read MGTP…SNID and LERQ…LSEV. Phosphoserine is present on serine 18. Residues 29-71 are a coiled coil; that stretch reads REAEARLAAKRAARAEARDIRMRELERQQKELDEKSDKQYAEN. The span at 53-68 shows a compositional bias: basic and acidic residues; that stretch reads LERQQKELDEKSDKQY. Polar residues predominate over residues 73-102; the sequence is TRPSSRNSASATTPLSGNSSRRVSGDTSSL. Serine 77, serine 80, serine 88, serine 92, and serine 96 each carry phosphoserine. Position 99 is a phosphothreonine (threonine 99). Residues serine 100 and serine 101 each carry the phosphoserine modification. Coiled-coil stretches lie at residues 106–202 and 245–393; these read DTSL…LIEK and LDVR…KANR.

It belongs to the LRRFIP family. In terms of assembly, interacts with DVL3 and FLII. Weakly interacts with MYD88 in resting cells. Following LPS-stimulation, the interaction with MYD88 is rapidly enhanced; the complex gradually dissociates to basal levels after 6 hours of stimulation. Interaction with MYD88 is regulated by LPS-induced phosphorylation. In the presence of LPS, competes with FLII for MYD88-binding.

Functionally, may function as activator of the canonical Wnt signaling pathway, in association with DVL3, upstream of CTNNB1/beta-catenin. Positively regulates Toll-like receptor (TLR) signaling in response to agonist probably by competing with the negative FLII regulator for MYD88-binding. The sequence is that of Leucine-rich repeat flightless-interacting protein 2 (LRRFIP2) from Bos taurus (Bovine).